A 223-amino-acid polypeptide reads, in one-letter code: Cytotoxic T-lymphocyte protein 4 (223 aa).

Residues 1 to 35 form the signal peptide; the sequence is MACLGFQRHKAQLNLATRTWPCTLLFFLLFIPVFC. The Extracellular portion of the chain corresponds to 36-161; sequence KAMHVAQPAV…IDPEPCPDSD (126 aa). The Ig-like V-type domain maps to 39-140; sequence HVAQPAVVLA…VELMYPPPYY (102 aa). A homodimerization region spans residues 46-50; sequence VLASS. 2 disulfide bridges follow: cysteine 58–cysteine 129 and cysteine 85–cysteine 103. Asparagine 113 carries an N-linked (GlcNAc...) asparagine glycan. The important for interaction with CD80 and CD86 stretch occupies residues 134 to 139; it reads MYPPPY. Asparagine 145 is a glycosylation site (N-linked (GlcNAc...) asparagine). Residues 150 to 155 are homodimerization; that stretch reads YVIDPE. The helical transmembrane segment at 162–182 threads the bilayer; sequence FLLWILAAVSSGLFFYSFLLT. Over 183-223 the chain is Cytoplasmic; the sequence is AVSLSKMLKKRSPLTTGVYVKMPPTEPECEKQFQPYFIPIN. A Phosphotyrosine; by TXK and JAK2 modification is found at tyrosine 201.

As to quaternary structure, homodimer; disulfide-linked. Binds to CD80/B7-1 and CD86/B7.2. Interacts with ICOSLG. N-glycosylation is important for dimerization. Post-translationally, phosphorylation at Tyr-201 prevents binding to the AP-2 adapter complex, blocks endocytosis, and leads to retention of CTLA4 on the cell surface. Widely expressed with highest levels in lymphoid tissues. Detected in activated T-cells where expression levels are 30- to 50-fold less than CD28, the stimulatory coreceptor, on the cell surface following activation.

Its subcellular location is the cell membrane. In terms of biological role, inhibitory receptor acting as a major negative regulator of T-cell responses. The affinity of CTLA4 for its natural B7 family ligands, CD80 and CD86, is considerably stronger than the affinity of their cognate stimulatory coreceptor CD28. The polypeptide is Cytotoxic T-lymphocyte protein 4 (CTLA4) (Homo sapiens (Human)).